The chain runs to 224 residues: Orotate phosphoribosyltransferase (224 aa).

Lysine 29 is a 5-phospho-alpha-D-ribose 1-diphosphate binding site. 37-38 (FF) serves as a coordination point for orotate. 5-phospho-alpha-D-ribose 1-diphosphate contacts are provided by residues 75–76 (YK), arginine 105, lysine 106, lysine 109, histidine 111, and 130–138 (DDVITAGTS). Orotate-binding residues include threonine 134 and arginine 162.

The protein belongs to the purine/pyrimidine phosphoribosyltransferase family. PyrE subfamily. In terms of assembly, homodimer. It depends on Mg(2+) as a cofactor.

The enzyme catalyses orotidine 5'-phosphate + diphosphate = orotate + 5-phospho-alpha-D-ribose 1-diphosphate. It participates in pyrimidine metabolism; UMP biosynthesis via de novo pathway; UMP from orotate: step 1/2. Functionally, catalyzes the transfer of a ribosyl phosphate group from 5-phosphoribose 1-diphosphate to orotate, leading to the formation of orotidine monophosphate (OMP). The chain is Orotate phosphoribosyltransferase from Bordetella bronchiseptica (strain ATCC BAA-588 / NCTC 13252 / RB50) (Alcaligenes bronchisepticus).